A 1177-amino-acid polypeptide reads, in one-letter code: Phospholipid-transporting ATPase IF (1177 aa).

Residues 1 to 55 are Cytoplasmic-facing; the sequence is MWRWIRQQLGFDPPHQSDTRTIYVANRFPQNGLYTPQKFIDNRIISSKYTVWNFV. The chain crosses the membrane as a helical span at residues 56–77; sequence PKNLFEQFRRVANFYFLIIFLV. Over 78 to 82 the chain is Extracellular; sequence QLMID. A helical membrane pass occupies residues 83–104; the sequence is TPTSPVTSGLPLFFVITVTAIK. Over 105 to 289 the chain is Cytoplasmic; that stretch reads QGYEDWLRHN…SAVEKSMNTF (185 aa). A helical membrane pass occupies residues 290–311; it reads LIIYLVILISEAVISTILKYTW. Over 312 to 341 the chain is Extracellular; sequence QAEEKWDEPWYNQKTEHQRNSSKILRFISD. A helical membrane pass occupies residues 342 to 359; the sequence is FLAFLVLYNFIIPISLYV. The Cytoplasmic segment spans residues 360-876; the sequence is TVEMQKFLGS…HGHFYYIRIA (517 aa). Aspartate 407 (4-aspartylphosphate intermediate) is an active-site residue. Residues aspartate 407, lysine 408, threonine 409, glutamate 531, phenylalanine 572, lysine 595, arginine 626, threonine 706, glycine 707, aspartate 708, arginine 794, and lysine 800 each coordinate ATP. Mg(2+) is bound at residue aspartate 407. Threonine 409 contributes to the Mg(2+) binding site. Aspartate 821 provides a ligand contact to Mg(2+). Asparagine 824 and aspartate 825 together coordinate ATP. Aspartate 825 is a Mg(2+) binding site. A helical transmembrane segment spans residues 877 to 898; the sequence is TLVQYFFYKNVCFITPQFLYQF. Topologically, residues 899 to 910 are extracellular; the sequence is YCLFSQQTLYDS. Residues 911–930 form a helical membrane-spanning segment; sequence VYLTLYNICFTSLPILIYSL. The Cytoplasmic segment spans residues 931–960; sequence LEQHVDPHVLQNKPTLYRDISKNRLLSIKT. Residues 961 to 982 traverse the membrane as a helical segment; it reads FLYWTILGFSHAFIFFFGSYLL. Residues 983-997 are Extracellular-facing; that stretch reads IGKDTSLLGNGQMFG. The chain crosses the membrane as a helical span at residues 998-1020; sequence NWTFGTLVFTVMVITVTVKMALE. Over 1021–1025 the chain is Cytoplasmic; it reads THFWT. A helical membrane pass occupies residues 1026-1047; that stretch reads WINHLVTWGSIIFYFVFSLFYG. Residues 1048–1065 lie on the Extracellular side of the membrane; the sequence is GILWPFLGSQNMYFVFIQ. Residues 1066 to 1090 traverse the membrane as a helical segment; the sequence is LLSSGSAWFAIILMVVTCLFLDIIK. The Cytoplasmic portion of the chain corresponds to 1091–1177; that stretch reads KVFDRHLHPT…TLSTMDSSTC (87 aa). The residue at position 1154 (serine 1154) is a Phosphoserine.

This sequence belongs to the cation transport ATPase (P-type) (TC 3.A.3) family. Type IV subfamily. Component of a P4-ATPase flippase complex which consists of a catalytic alpha subunit ATP11B and an accessory beta subunit TMEM30A. Requires Mg(2+) as cofactor.

The protein localises to the recycling endosome membrane. It is found in the early endosome. The protein resides in the endoplasmic reticulum. It localises to the golgi apparatus. Its subcellular location is the trans-Golgi network. It catalyses the reaction ATP + H2O + phospholipidSide 1 = ADP + phosphate + phospholipidSide 2.. It carries out the reaction a 1,2-diacyl-sn-glycero-3-phospho-L-serine(out) + ATP + H2O = a 1,2-diacyl-sn-glycero-3-phospho-L-serine(in) + ADP + phosphate + H(+). The enzyme catalyses a 1,2-diacyl-sn-glycero-3-phosphoethanolamine(out) + ATP + H2O = a 1,2-diacyl-sn-glycero-3-phosphoethanolamine(in) + ADP + phosphate + H(+). Its activity is regulated as follows. The ATPase activity is up-regulated by aminophospholipids PS and PE. Its function is as follows. Catalytic component of a P4-ATPase flippase complex which catalyzes the hydrolysis of ATP coupled to the transport of aminophospholipids, phosphatidylserines (PS) and phosphatidylethanolamines (PE), from the outer to the inner leaflet of intracellular membranes. May contribute to the maintenance of membrane lipid asymmetry in endosome compartment. The sequence is that of Phospholipid-transporting ATPase IF (ATP11B) from Homo sapiens (Human).